A 361-amino-acid polypeptide reads, in one-letter code: G kinase-anchoring protein 1-A (361 aa).

Disordered stretches follow at residues 22-111 and 140-183; these read DSSS…EDWQ and FEES…KDFQ. Low complexity predominate over residues 35–48; the sequence is AHSSGKAHSGSAAR. A coiled-coil region spans residues 51–79; sequence NKGNEKKKEKRRKKKEQQQSEANELRNLA. The span at 158-168 shows a compositional bias: basic residues; sequence KVNKKDKRKNN. Coiled coils occupy residues 246–296 and 326–346; these read KDGR…QEGE and AALE…VKYQ.

Belongs to the GKAP1 family.

It localises to the golgi apparatus. Its function is as follows. May play a role in the regulation of insulin-dependent IRS1 tyrosine phosphorylation in adipocytes. The polypeptide is G kinase-anchoring protein 1-A (gkap1-a) (Xenopus laevis (African clawed frog)).